Reading from the N-terminus, the 188-residue chain is UPF0398 protein SE_1135 (188 aa).

This sequence belongs to the UPF0398 family.

This chain is UPF0398 protein SE_1135, found in Staphylococcus epidermidis (strain ATCC 12228 / FDA PCI 1200).